Here is a 335-residue protein sequence, read N- to C-terminus: GTPase Obg (335 aa).

Residues 1–159 form the Obg domain; that stretch reads MKFVDSAKIS…YELEMELKLM (159 aa). Residues 160-323 form the OBG-type G domain; sequence ADVGLVGFPN…LKDELWRQVS (164 aa). GTP contacts are provided by residues 166-173, 191-195, 213-216, 280-283, and 304-306; these read GFPNAGKS, FTTLV, DIPG, TKMD, and SSV. Serine 173 and threonine 193 together coordinate Mg(2+).

This sequence belongs to the TRAFAC class OBG-HflX-like GTPase superfamily. OBG GTPase family. As to quaternary structure, monomer. Requires Mg(2+) as cofactor.

Its subcellular location is the cytoplasm. An essential GTPase which binds GTP, GDP and possibly (p)ppGpp with moderate affinity, with high nucleotide exchange rates and a fairly low GTP hydrolysis rate. Plays a role in control of the cell cycle, stress response, ribosome biogenesis and in those bacteria that undergo differentiation, in morphogenesis control. In Chlorobaculum tepidum (strain ATCC 49652 / DSM 12025 / NBRC 103806 / TLS) (Chlorobium tepidum), this protein is GTPase Obg.